The chain runs to 260 residues: HTH-type transcriptional repressor NanR (260 aa).

Positions 1–22 (MNAFDSQAEDSPTSLGRSLRRR) are disordered. The 69-residue stretch at 27-95 (KKLSEMVEEE…NGERARVSRP (69 aa)) folds into the HTH gntR-type domain. Residues 55 to 74 (ERELMAFFNVGRPSVREALA) constitute a DNA-binding region (H-T-H motif).

It belongs to the NanR family.

Its function is as follows. Transcriptional repressor that controls expression of the genes required for the catabolism of sialic acids. The polypeptide is HTH-type transcriptional repressor NanR (Salmonella newport (strain SL254)).